The chain runs to 251 residues: MSDIGDWFRSIPTITRYWFAATVAVPLVGKLGLISPAYFFLWPEAFLYRFQIWRPITATFYFPVGPGTGFLYLVNLYFLYQYSTRLETGAFDGRPADYLFMLLFNWICIVITGLAMDMQLLMIPLIMSVLYVWAQLNRDMIVSFWFGTRFKACYLPWVILGFNYIIGGSVINELIGNLVGHLYFFLMFRYPMDLGGRNFLSTPQFLYRWLPSRRGGVSGFGVPPASMRRAADQNGGGGRHNWGQGFRLGDQ.

Ser-2 is subject to N-acetylserine. At 2-15 the chain is on the cytoplasmic side; the sequence is SDIGDWFRSIPTIT. The helical transmembrane segment at 16 to 31 threads the bilayer; that stretch reads RYWFAATVAVPLVGKL. Residues 32 to 69 lie on the Lumenal side of the membrane; sequence GLISPAYFFLWPEAFLYRFQIWRPITATFYFPVGPGTG. Residues 70–89 form a helical membrane-spanning segment; sequence FLYLVNLYFLYQYSTRLETG. The Cytoplasmic segment spans residues 90–94; the sequence is AFDGR. The chain crosses the membrane as a helical span at residues 95 to 115; sequence PADYLFMLLFNWICIVITGLA. Over 116-122 the chain is Lumenal; it reads MDMQLLM. A helical transmembrane segment spans residues 123–137; that stretch reads IPLIMSVLYVWAQLN. Residues 138-154 are Cytoplasmic-facing; sequence RDMIVSFWFGTRFKACY. A helical transmembrane segment spans residues 155-166; that stretch reads LPWVILGFNYII. The Lumenal segment spans residues 167 to 170; sequence GGSV. The chain crosses the membrane as a helical span at residues 171–189; that stretch reads INELIGNLVGHLYFFLMFR. The Cytoplasmic portion of the chain corresponds to 190-251; the sequence is YPMDLGGRNF…WGQGFRLGDQ (62 aa). Phosphoserine is present on Ser-201. Residue Thr-202 is modified to Phosphothreonine. Ser-226 carries the post-translational modification Phosphoserine. Residues 229–251 are disordered; it reads RAADQNGGGGRHNWGQGFRLGDQ. An SHP-box motif is present at residues 241 to 248; that stretch reads NWGQGFRL.

It belongs to the derlin family. As to quaternary structure, homotetramer. The four subunits of the tetramer are arranged in a twofold symmetry. Forms homo- and heterooligomers with DERL2 and DERL3; binding to DERL3 is poorer than that between DERL2 and DERL3. Interacts (via SHP-box motif) with VCP. Interacts with AMFR, SELENOS, SEL1L, SELENOK and SYVN1, as well as with SEL1L-SYVN1 and VCP-SELENOS protein complexes; this interaction is weaker than that observed between DERL2 and these complexes. Interacts with NGLY1 and YOD1. Does not bind to EDEM1. Interacts with DNAJB9. Interacts with RNF103. Interacts with HM13. Interacts with XBP1 isoform 1 (via luminal/ectodomain domain); the interaction obviates the need for ectodomain shedding prior HM13/SPP-mediated XBP1 isoform 1 cleavage. Interacts with the signal recognition particle/SRP and the SRP receptor; in the process of endoplasmic reticulum stress-induced pre-emptive quality control. May interact with UBXN6. Interacts with ZFAND2B; probably through VCP. Interacts with CCDC47. Interacts with C18orf32. May interact with TRAM1. Forms a complex with SVIP and VCP/p97.

The protein resides in the endoplasmic reticulum membrane. Functional component of endoplasmic reticulum-associated degradation (ERAD) for misfolded lumenal proteins. Forms homotetramers which encircle a large channel traversing the endoplasmic reticulum (ER) membrane. This allows the retrotranslocation of misfolded proteins from the ER into the cytosol where they are ubiquitinated and degraded by the proteasome. The channel has a lateral gate within the membrane which provides direct access to membrane proteins with no need to reenter the ER lumen first. May mediate the interaction between VCP and the misfolded protein. Also involved in endoplasmic reticulum stress-induced pre-emptive quality control, a mechanism that selectively attenuates the translocation of newly synthesized proteins into the endoplasmic reticulum and reroutes them to the cytosol for proteasomal degradation. By controlling the steady-state expression of the IGF1R receptor, indirectly regulates the insulin-like growth factor receptor signaling pathway. The polypeptide is Derlin-1 (Bos taurus (Bovine)).